The primary structure comprises 505 residues: Histidine ammonia-lyase (505 aa).

The 5-imidazolinone (Ala-Gly) cross-link spans 141-143 (ASG). The residue at position 142 (Ser142) is a 2,3-didehydroalanine (Ser).

This sequence belongs to the PAL/histidase family. Contains an active site 4-methylidene-imidazol-5-one (MIO), which is formed autocatalytically by cyclization and dehydration of residues Ala-Ser-Gly.

It localises to the cytoplasm. The enzyme catalyses L-histidine = trans-urocanate + NH4(+). It functions in the pathway amino-acid degradation; L-histidine degradation into L-glutamate; N-formimidoyl-L-glutamate from L-histidine: step 1/3. This Bacillus thuringiensis subsp. konkukian (strain 97-27) protein is Histidine ammonia-lyase.